The following is a 306-amino-acid chain: D-alanine--D-alanine ligase (306 aa).

The region spanning 101 to 303 (KQVWQAVGLP…FSQLVVKILE (203 aa)) is the ATP-grasp domain. 134 to 189 (FTHLGLPLIVKPSREGSSVGMSKVNTLSELPAALEEAFRHDDDILVEKWLSGPEYT) contacts ATP. Positions 257, 270, and 272 each coordinate Mg(2+).

This sequence belongs to the D-alanine--D-alanine ligase family. Requires Mg(2+) as cofactor. Mn(2+) serves as cofactor.

It is found in the cytoplasm. The catalysed reaction is 2 D-alanine + ATP = D-alanyl-D-alanine + ADP + phosphate + H(+). It functions in the pathway cell wall biogenesis; peptidoglycan biosynthesis. In terms of biological role, cell wall formation. This chain is D-alanine--D-alanine ligase, found in Pectobacterium carotovorum subsp. carotovorum (strain PC1).